The following is a 396-amino-acid chain: Ribosomal RNA large subunit methyltransferase I (396 aa).

The region spanning 2–79 is the PUA domain; it reads SIRIKLKPGR…KEEAIDRDFF (78 aa).

Belongs to the methyltransferase superfamily. RlmI family.

The protein resides in the cytoplasm. The catalysed reaction is cytidine(1962) in 23S rRNA + S-adenosyl-L-methionine = 5-methylcytidine(1962) in 23S rRNA + S-adenosyl-L-homocysteine + H(+). In terms of biological role, specifically methylates the cytosine at position 1962 (m5C1962) of 23S rRNA. This is Ribosomal RNA large subunit methyltransferase I from Shewanella amazonensis (strain ATCC BAA-1098 / SB2B).